The following is a 142-amino-acid chain: MFANVGWGEMLVLVIAGLVILGPERLPGAIRWTAGAVRQARDYVTGATSQLREELGTDFDDLREPLSELQRLRGMTPRAALTKHLLDGDDSIFTGKFDQNGKSEKPEQKPEKPQSAPGPAAAVPDQPAGGRSGSTPYDTDAT.

The helical transmembrane segment at 2–22 (FANVGWGEMLVLVIAGLVILG) threads the bilayer. Positions 89–142 (DDSIFTGKFDQNGKSEKPEQKPEKPQSAPGPAAAVPDQPAGGRSGSTPYDTDAT) are disordered. Positions 99–112 (QNGKSEKPEQKPEK) are enriched in basic and acidic residues. Residues 133–142 (GSTPYDTDAT) are compositionally biased toward polar residues.

It belongs to the TatB family. In terms of assembly, the Tat system comprises two distinct complexes: a TatABC complex, containing multiple copies of TatA, TatB and TatC subunits, and a separate TatA complex, containing only TatA subunits. Substrates initially bind to the TatABC complex, which probably triggers association of the separate TatA complex to form the active translocon.

It is found in the cell membrane. Part of the twin-arginine translocation (Tat) system that transports large folded proteins containing a characteristic twin-arginine motif in their signal peptide across membranes. Together with TatC, TatB is part of a receptor directly interacting with Tat signal peptides. TatB may form an oligomeric binding site that transiently accommodates folded Tat precursor proteins before their translocation. This Mycolicibacterium vanbaalenii (strain DSM 7251 / JCM 13017 / BCRC 16820 / KCTC 9966 / NRRL B-24157 / PYR-1) (Mycobacterium vanbaalenii) protein is Sec-independent protein translocase protein TatB.